The following is a 256-amino-acid chain: Putative F-box protein At3g51171 (256 aa).

An F-box domain is found at 1–44; that stretch reads MVPLPWELEEDILSRLAAQSLVRFRSVCKRWNYLFDEKSFIKNH.

The chain is Putative F-box protein At3g51171 from Arabidopsis thaliana (Mouse-ear cress).